Consider the following 351-residue polypeptide: Auxin efflux carrier component 5 (351 aa).

A run of 10 helical transmembrane segments spans residues 7 to 27, 39 to 59, 71 to 91, 100 to 120, 132 to 152, 210 to 230, 234 to 254, 271 to 291, 295 to 315, and 329 to 349; these read VYKVIEAMVPLYVALILGYGS, CDAINRLVCYFTLPLFTIEFT, FIAADVLSKVIIVTVLALWAK, WSITSFSLCTLTNSLVVGVPL, LVVQSSVFQAIVWLTLLLFVL, ILGIAWAFISNRWHLELPGIL, ILIMSKAGTGTAMFNMGIFMA, MVLKFIAGPAAMAIGSIVLGL, VLRVAIIQAALPQSITSFIFA, and VIFGMLVSLPVLVAYYAALEF.

This sequence belongs to the auxin efflux carrier (TC 2.A.69.1) family. Expressed in elongating parts of hypocotyl, cotyledon vasculature and guard cells. Detected in root pericycle and root tip and at later developmental stages in leaves, stems and flowers. Expressed in veins of mature leaves.

The protein localises to the endoplasmic reticulum membrane. It is found in the cell membrane. Auxin transporter regulating intracellular auxin homeostasis and metabolism. Mediates the auxin transport from the cytosol into the lumen of the endoplasmic reticulum. May also act as an auxin efflux carrier when located to the cell membrane. PIN5 and PIN8 may have an antagonistic/compensatory activity. Involved in unfolded protein response (UPR) activation. Involved in the control of vein patterning. Promotes vein formation. PIN5, PIN6, and PIN8 control vein network geometry, but they are expressed in mutually exclusive domains of leaf vascular cells. In Arabidopsis thaliana (Mouse-ear cress), this protein is Auxin efflux carrier component 5.